Here is a 251-residue protein sequence, read N- to C-terminus: Ubiquinone/menaquinone biosynthesis C-methyltransferase UbiE (251 aa).

S-adenosyl-L-methionine is bound by residues Thr74, Asp95, 123 to 124, and Ser140; that span reads NA.

Belongs to the class I-like SAM-binding methyltransferase superfamily. MenG/UbiE family.

It catalyses the reaction a 2-demethylmenaquinol + S-adenosyl-L-methionine = a menaquinol + S-adenosyl-L-homocysteine + H(+). The catalysed reaction is a 2-methoxy-6-(all-trans-polyprenyl)benzene-1,4-diol + S-adenosyl-L-methionine = a 5-methoxy-2-methyl-3-(all-trans-polyprenyl)benzene-1,4-diol + S-adenosyl-L-homocysteine + H(+). It functions in the pathway quinol/quinone metabolism; menaquinone biosynthesis; menaquinol from 1,4-dihydroxy-2-naphthoate: step 2/2. The protein operates within cofactor biosynthesis; ubiquinone biosynthesis. In terms of biological role, methyltransferase required for the conversion of demethylmenaquinol (DMKH2) to menaquinol (MKH2) and the conversion of 2-polyprenyl-6-methoxy-1,4-benzoquinol (DDMQH2) to 2-polyprenyl-3-methyl-6-methoxy-1,4-benzoquinol (DMQH2). The protein is Ubiquinone/menaquinone biosynthesis C-methyltransferase UbiE of Escherichia coli O1:K1 / APEC.